Here is a 156-residue protein sequence, read N- to C-terminus: Ribosomal RNA large subunit methyltransferase H (156 aa).

S-adenosyl-L-methionine-binding positions include L73, G104, and 123-128 (LSPLTL).

Belongs to the RNA methyltransferase RlmH family. In terms of assembly, homodimer.

It localises to the cytoplasm. The enzyme catalyses pseudouridine(1915) in 23S rRNA + S-adenosyl-L-methionine = N(3)-methylpseudouridine(1915) in 23S rRNA + S-adenosyl-L-homocysteine + H(+). In terms of biological role, specifically methylates the pseudouridine at position 1915 (m3Psi1915) in 23S rRNA. In Marinobacter nauticus (strain ATCC 700491 / DSM 11845 / VT8) (Marinobacter aquaeolei), this protein is Ribosomal RNA large subunit methyltransferase H.